A 481-amino-acid polypeptide reads, in one-letter code: Glutamate--tRNA ligase (481 aa).

The 'HIGH' region signature appears at 9 to 19 (PSPTGNLHIGT). The short motif at 249–253 (KLSKR) is the 'KMSKS' region element. K252 is an ATP binding site.

It belongs to the class-I aminoacyl-tRNA synthetase family. Glutamate--tRNA ligase type 1 subfamily. As to quaternary structure, monomer.

The protein resides in the cytoplasm. The enzyme catalyses tRNA(Glu) + L-glutamate + ATP = L-glutamyl-tRNA(Glu) + AMP + diphosphate. Its function is as follows. Catalyzes the attachment of glutamate to tRNA(Glu) in a two-step reaction: glutamate is first activated by ATP to form Glu-AMP and then transferred to the acceptor end of tRNA(Glu). This chain is Glutamate--tRNA ligase, found in Picosynechococcus sp. (strain ATCC 27264 / PCC 7002 / PR-6) (Agmenellum quadruplicatum).